The following is a 153-amino-acid chain: Cytochrome c-type biogenesis protein CcmE (153 aa).

Residues 1 to 8 lie on the Cytoplasmic side of the membrane; that stretch reads MATRRGRR. A helical; Signal-anchor for type II membrane protein transmembrane segment spans residues 9–29; sequence ALLIAGGVGLLALAAALVLNA. Residues 30 to 153 are Periplasmic-facing; the sequence is LRSNLVFFFS…PSATLQTEAR (124 aa). H124 and Y128 together coordinate heme.

Belongs to the CcmE/CycJ family.

It is found in the cell inner membrane. Its function is as follows. Heme chaperone required for the biogenesis of c-type cytochromes. Transiently binds heme delivered by CcmC and transfers the heme to apo-cytochromes in a process facilitated by CcmF and CcmH. This chain is Cytochrome c-type biogenesis protein CcmE, found in Bordetella bronchiseptica (strain ATCC BAA-588 / NCTC 13252 / RB50) (Alcaligenes bronchisepticus).